The following is a 301-amino-acid chain: tRNA uridine(34) hydroxylase (301 aa).

Residues 121–215 (RSDDVVLIDT…YLEEVPAENS (95 aa)) form the Rhodanese domain. Cys175 serves as the catalytic Cysteine persulfide intermediate.

Belongs to the TrhO family.

The enzyme catalyses uridine(34) in tRNA + AH2 + O2 = 5-hydroxyuridine(34) in tRNA + A + H2O. Catalyzes oxygen-dependent 5-hydroxyuridine (ho5U) modification at position 34 in tRNAs. This Ruegeria pomeroyi (strain ATCC 700808 / DSM 15171 / DSS-3) (Silicibacter pomeroyi) protein is tRNA uridine(34) hydroxylase.